The sequence spans 433 residues: Ornithine decarboxylase, chloroplastic (433 aa).

Residue K96 is modified to N6-(pyridoxal phosphate)lysine. Pyridoxal 5'-phosphate-binding positions include S228, G266, and 299–302 (EPGR). A substrate-binding site is contributed by 342–343 (YD). The active-site Proton donor; shared with dimeric partner is C378. A substrate-binding site is contributed by D379. Y407 contributes to the pyridoxal 5'-phosphate binding site.

The protein belongs to the Orn/Lys/Arg decarboxylase class-II family. In terms of assembly, homodimer. Only the dimer is catalytically active, as the active sites are constructed of residues from both monomers. The cofactor is pyridoxal 5'-phosphate.

Its subcellular location is the plastid. It localises to the chloroplast. The catalysed reaction is L-ornithine + H(+) = putrescine + CO2. Its pathway is alkaloid biosynthesis; nicotine biosynthesis. It participates in amine and polyamine biosynthesis; putrescine biosynthesis via L-ornithine pathway; putrescine from L-ornithine: step 1/1. Functionally, involved in the biosynthesis of pyridine alkaloid natural products, leading mainly to the production of anabasine, anatabine, nicotine and nornicotine, effective deterrents against herbivores with antiparasitic and pesticide properties (neurotoxins); nornicotine serves as the precursor in the synthesis of the carcinogen compound N'-nitrosonornicotine (NNN). Catalyzes the first and rate-limiting step of polyamine biosynthesis that converts ornithine into putrescine, which is the precursor for the polyamines, spermidine and spermine. Polyamines are essential for cell proliferation and are implicated in cellular processes, ranging from DNA replication to apoptosis. This Nicotiana glauca (Glaucous tobacco) protein is Ornithine decarboxylase, chloroplastic.